A 406-amino-acid chain; its full sequence is Lymphocyte transmembrane adapter 1 (406 aa).

The segment at 1-25 is disordered; it reads MYTTPAPPEITRRSSEPSTQQGTLG. Over 1-33 the chain is Extracellular; the sequence is MYTTPAPPEITRRSSEPSTQQGTLGSLEGEKGH. The chain crosses the membrane as a helical; Signal-anchor for type III membrane protein span at residues 34 to 54; the sequence is LLFPGFVVLVTIFLVVIVTCI. Residues 55–406 lie on the Cytoplasmic side of the membrane; it reads LWSRKKQKKR…LATETSGEEV (352 aa). A disordered region spans residues 109-131; it reads ESLLSRASDSPEPEVPQASGSLQ. Residue Y184 is modified to Phosphotyrosine. Positions 219-258 are disordered; the sequence is AEGGHAGCGKATDRTGVWAPGLQGSNSLSEGDDSSQSSND. Residues 242–258 show a composition bias toward low complexity; that stretch reads GSNSLSEGDDSSQSSND. A phosphotyrosine mark is found at Y259, Y285, and Y352. The tract at residues 358–406 is disordered; that stretch reads PELEGKDWKQGPGTWHPSDERTPSDQAGKFCEAVYPAGSLATETSGEEV.

In terms of assembly, when phosphorylated, interacts with GRB2, PIK3R1 and GRAP2. Phosphorylated on tyrosines upon TCR or BCR activation; which leads to the recruitment of GRB2, PIK3R1 and GRAP2.

The protein localises to the cell membrane. Negatively regulates TCR (T-cell antigen receptor)-mediated signaling in T-cells and BCR (B-cell antigen receptor)-mediated signaling in B-cells. The chain is Lymphocyte transmembrane adapter 1 (Lax1) from Rattus norvegicus (Rat).